The sequence spans 124 residues: Small ribosomal subunit protein uS12 (124 aa).

At Asp-89 the chain carries 3-methylthioaspartic acid. Residues Leu-102–Ser-124 form a disordered region. Residues Asn-109 to Ser-124 show a composition bias toward basic residues.

This sequence belongs to the universal ribosomal protein uS12 family. In terms of assembly, part of the 30S ribosomal subunit. Contacts proteins S8 and S17. May interact with IF1 in the 30S initiation complex.

In terms of biological role, with S4 and S5 plays an important role in translational accuracy. Interacts with and stabilizes bases of the 16S rRNA that are involved in tRNA selection in the A site and with the mRNA backbone. Located at the interface of the 30S and 50S subunits, it traverses the body of the 30S subunit contacting proteins on the other side and probably holding the rRNA structure together. The combined cluster of proteins S8, S12 and S17 appears to hold together the shoulder and platform of the 30S subunit. The polypeptide is Small ribosomal subunit protein uS12 (Francisella tularensis subsp. tularensis (strain FSC 198)).